The sequence spans 250 residues: Envelope glycoprotein L (250 aa).

A signal peptide spans 1 to 18; sequence MELLLFVMSLILLTFSKA. Residues 31 to 239 enclose the gL betaherpesvirus-type domain; sequence KLDDCIAAVI…EAYNSKLPFR (209 aa). Cys-136 and Cys-141 are disulfide-bonded.

It belongs to the herpesviridae glycoprotein L (gL) family. Betaherpesvirinae gL subfamily. In terms of assembly, interacts with glycoprotein H (gH); this interaction is necessary for the correct processing and cell surface expression of gH. Part of a gH-gL-gO complex.

It is found in the virion membrane. It localises to the host cell membrane. The protein localises to the host Golgi apparatus. The protein resides in the host trans-Golgi network. The heterodimer glycoprotein H-glycoprotein L is required for the fusion of viral and plasma membranes leading to virus entry into the host cell. Acts as a functional inhibitor of gH and maintains gH in an inhibited form. Upon binding to host integrins, gL dissociates from gH leading to activation of the viral fusion glycoproteins gB and gH. This is Envelope glycoprotein L from Homo sapiens (Human).